Here is a 782-residue protein sequence, read N- to C-terminus: General transcription and DNA repair factor IIH helicase/translocase subunit XPB (782 aa).

Residues 1–11 show a composition bias toward basic and acidic residues; it reads MGKRDRADRDK. Disordered regions lie at residues 1–51 and 220–240; these read MGKR…ESGT and ISKT…DPQG. Positions 6 to 18 match the Nuclear localization signal motif; sequence RADRDKKKSRKRH. Residues 21 to 30 show a composition bias toward acidic residues; the sequence is DEEDDEEDAP. Residues 327–488 enclose the Helicase ATP-binding domain; that stretch reads MFGNGRARSG…DLNFLIGPKL (162 aa). Position 340-347 (340-347) interacts with ATP; sequence LPCGAGKS. The DEVH box motif lies at 441–444; that stretch reads DEVH. The 161-residue stretch at 542 to 702 folds into the Helicase C-terminal domain; it reads RACQFLIKFH…LAGMEEEDLA (161 aa). S686 carries the phosphoserine modification. A Phosphoserine; by CK2 modification is found at S751.

The protein belongs to the helicase family. RAD25/XPB subfamily. As to quaternary structure, component of the 7-subunit TFIIH core complex composed of XPB/ERCC3, XPD/ERCC2, GTF2H1, GTF2H2, GTF2H3, GTF2H4 and GTF2H5, which is active in NER. The core complex associates with the 3-subunit CDK-activating kinase (CAK) module composed of CCNH/cyclin H, CDK7 and MNAT1 to form the 10-subunit holoenzyme (holo-TFIIH) active in transcription. Interacts with PUF60. Interacts with ATF7IP. Interacts with KAT2A; leading to KAT2A recruitment to promoters and acetylation of histones. Part of TBP-based Pol II pre-initiation complex (PIC), in which Pol II core assembles with general transcription factors and other specific initiation factors including GTF2E1, GTF2E2, GTF2F1, GTF2F2, TCEA1, ERCC2, ERCC3, GTF2H2, GTF2H3, GTF2H4, GTF2H5, GTF2A1, GTF2A2, GTF2B and TBP; this large multi-subunit PIC complex mediates DNA unwinding and targets Pol II core to the transcription start site where the first phosphodiester bond forms. In terms of processing, phosphorylation on Ser-751 by CK2 controls the 5'-excision activity of ERCC1-XPF endonuclease; phosphorylated protein inhibits the excision activity and thus NER. Dephosphorylation reactivates the 5'-excision step. Phosphorylation has no effect on transcription or the 3'-5' helicase activity.

The protein localises to the nucleus. The enzyme catalyses Couples ATP hydrolysis with the unwinding of duplex DNA by translocating in the 3'-5' direction.. It carries out the reaction ATP + H2O = ADP + phosphate + H(+). Its activity is regulated as follows. Phosphorylation on Ser-751 by CK2 controls the 5'-excision activity of ERCC1-XPF endonuclease; phosphorylated protein inhibits the excision activity and thus NER. ATPase activity is stimulated by TFIIH subunit p52 (GTF2H4). DNA translocase activity by this subunit in TFIIH is stimulated by XPA, ERCC5/XPG and XFP plus ERCC1. Functionally, ATP-dependent 3'-5' DNA helicase/translocase; binds dsDNA rather than ssDNA, unzipping it in a translocase rather than classical helicase activity. Component of the general transcription and DNA repair factor IIH (TFIIH) core complex. When complexed to CDK-activating kinase (CAK), involved in RNA transcription by RNA polymerase II. The ATPase activity of XPB/ERCC3, but not its helicase activity, is required for DNA opening; it may wrap around the damaged DNA wedging it open, causing localized melting and twisting that allows XPD/ERCC2 helicase to anchor. The ATP-dependent helicase activity of XPB/ERCC3 may be required for promoter escape. Also involved in transcription-coupled nucleotide excision repair (NER) of damaged DNA. In NER, TFIIH acts by opening DNA around the lesion to allow the excision of the damaged oligonucleotide and its replacement by a new DNA fragment. The structure of the TFIIH transcription complex differs from the NER-TFIIH complex; large movements by XPD/ERCC2 and XPB/ERCC3 are stabilized by XPA. The sequence is that of General transcription and DNA repair factor IIH helicase/translocase subunit XPB (ERCC3) from Macaca fascicularis (Crab-eating macaque).